The primary structure comprises 630 residues: Alpha-1,3-mannosyltransferase MNT3 (630 aa).

Topologically, residues 1-14 are cytoplasmic; that stretch reads MLKSLKSRRLILKR. The helical; Signal-anchor for type II membrane protein transmembrane segment at 15–31 threads the bilayer; that stretch reads LVTLLLSLFFSYLIFSA. Residues 32–630 are Lumenal-facing; that stretch reads SRNVTSSNKL…NDISRTWNAN (599 aa). 2 N-linked (GlcNAc...) asparagine glycosylation sites follow: Asn-34 and Asn-168.

The protein belongs to the MNN1/MNT family.

The protein resides in the golgi apparatus membrane. It participates in protein modification; protein glycosylation. Its function is as follows. Mannosyltransferase involved in adding the 4th and 5th mannose residues of O-linked glycans. The polypeptide is Alpha-1,3-mannosyltransferase MNT3 (MNT3) (Saccharomyces cerevisiae (strain ATCC 204508 / S288c) (Baker's yeast)).